The primary structure comprises 323 residues: tRNA dimethylallyltransferase (323 aa).

13 to 20 (GPTASGKT) lines the ATP pocket. 15–20 (TASGKT) lines the substrate pocket. 4 interaction with substrate tRNA regions span residues 42–45 (DSAL), 166–170 (QRIQR), 251–256 (RCVGYR), and 284–291 (KRQITWLR).

The protein belongs to the IPP transferase family. As to quaternary structure, monomer. It depends on Mg(2+) as a cofactor.

The enzyme catalyses adenosine(37) in tRNA + dimethylallyl diphosphate = N(6)-dimethylallyladenosine(37) in tRNA + diphosphate. Its function is as follows. Catalyzes the transfer of a dimethylallyl group onto the adenine at position 37 in tRNAs that read codons beginning with uridine, leading to the formation of N6-(dimethylallyl)adenosine (i(6)A). The chain is tRNA dimethylallyltransferase from Acidovorax sp. (strain JS42).